The following is a 283-amino-acid chain: Acetylglutamate kinase (283 aa).

Substrate-binding positions include 63-64, Arg-85, and Asn-178; that span reads GG.

Belongs to the acetylglutamate kinase family. ArgB subfamily.

The protein resides in the cytoplasm. It carries out the reaction N-acetyl-L-glutamate + ATP = N-acetyl-L-glutamyl 5-phosphate + ADP. It functions in the pathway amino-acid biosynthesis; L-arginine biosynthesis; N(2)-acetyl-L-ornithine from L-glutamate: step 2/4. In terms of biological role, catalyzes the ATP-dependent phosphorylation of N-acetyl-L-glutamate. This is Acetylglutamate kinase from Prochlorococcus marinus (strain MIT 9215).